Reading from the N-terminus, the 434-residue chain is Galactofuranosyl glycosyltransferase (434 aa).

Over 1-18 the chain is Cytoplasmic; it reads MAPPRWHHDRRRMAIFVR. A helical; Signal-anchor for type II membrane protein membrane pass occupies residues 19-38; that stretch reads VGLYTLLFLMGYVVPLIIFY. N-linked (GlcNAc...) asparagine glycosylation is found at N39, N100, N162, and N388. Residues 39–434 are Lumenal-facing; that stretch reads NRSRADTFED…KLLDFPVDPS (396 aa).

It belongs to the glycosyltransferase 2 family.

The protein localises to the endoplasmic reticulum membrane. It participates in glycolipid biosynthesis; glycosylphosphatidylinositol-anchor biosynthesis. Its function is as follows. Glycosyltransferase that may be responsible for the addition of galactofuranosyl residues to the nascent lipophosphoglycan (LPG) chain. It could alternatively be involved in the synthesis of the galactofuranosyl donor. The polypeptide is Galactofuranosyl glycosyltransferase (LPG1) (Leishmania donovani).